A 535-amino-acid chain; its full sequence is Glucose-6-phosphate isomerase (535 aa).

Glu-347 functions as the Proton donor in the catalytic mechanism. Catalysis depends on residues His-378 and Lys-493.

The protein belongs to the GPI family.

Its subcellular location is the cytoplasm. It catalyses the reaction alpha-D-glucose 6-phosphate = beta-D-fructose 6-phosphate. It functions in the pathway carbohydrate biosynthesis; gluconeogenesis. The protein operates within carbohydrate degradation; glycolysis; D-glyceraldehyde 3-phosphate and glycerone phosphate from D-glucose: step 2/4. Catalyzes the reversible isomerization of glucose-6-phosphate to fructose-6-phosphate. This chain is Glucose-6-phosphate isomerase, found in Chlamydia felis (strain Fe/C-56) (Chlamydophila felis).